Reading from the N-terminus, the 397-residue chain is Flavohemoprotein (397 aa).

In terms of domain architecture, Globin spans 4 to 140 (SFSPHTITLI…IANLLKDREA (137 aa)). Residue His87 coordinates heme b. Catalysis depends on charge relay system residues Tyr97 and Glu139. The tract at residues 151 to 397 (GGWIHWRRFV…FGPMDEEMAA (247 aa)) is reductase. One can recognise an FAD-binding FR-type domain in the interval 154–258 (IHWRRFVISK…TPPVGDFFLP (105 aa)). FAD contacts are provided by residues Tyr192 and 207–210 (RNYS). Residue 271–276 (GVGLTP) participates in NADP(+) binding. Position 387 to 390 (387 to 390 (FFGP)) interacts with FAD.

Belongs to the globin family. Two-domain flavohemoproteins subfamily. This sequence in the C-terminal section; belongs to the flavoprotein pyridine nucleotide cytochrome reductase family. Heme b is required as a cofactor. The cofactor is FAD.

It catalyses the reaction 2 nitric oxide + NADPH + 2 O2 = 2 nitrate + NADP(+) + H(+). It carries out the reaction 2 nitric oxide + NADH + 2 O2 = 2 nitrate + NAD(+) + H(+). Is involved in NO detoxification in an aerobic process, termed nitric oxide dioxygenase (NOD) reaction that utilizes O(2) and NAD(P)H to convert NO to nitrate, which protects the bacterium from various noxious nitrogen compounds. Therefore, plays a central role in the inducible response to nitrosative stress. This is Flavohemoprotein from Xylella fastidiosa (strain 9a5c).